The following is a 344-amino-acid chain: Fructose-1,6-bisphosphatase class 1 (344 aa).

The Mg(2+) site is built by glutamate 92, aspartate 115, leucine 117, and aspartate 118. Substrate is bound by residues 118–121 (DGSS), asparagine 211, tyrosine 244, and lysine 274. Glutamate 280 contacts Mg(2+).

It belongs to the FBPase class 1 family. Homotetramer. Mg(2+) serves as cofactor.

Its subcellular location is the cytoplasm. The catalysed reaction is beta-D-fructose 1,6-bisphosphate + H2O = beta-D-fructose 6-phosphate + phosphate. It functions in the pathway carbohydrate biosynthesis; gluconeogenesis. This Aeromonas hydrophila subsp. hydrophila (strain ATCC 7966 / DSM 30187 / BCRC 13018 / CCUG 14551 / JCM 1027 / KCTC 2358 / NCIMB 9240 / NCTC 8049) protein is Fructose-1,6-bisphosphatase class 1.